We begin with the raw amino-acid sequence, 853 residues long: Cytochrome P450 monooxygenase mpaDE' (853 aa).

The Lumenal portion of the chain corresponds to 1 to 6; sequence MESLSL. Residues 7-29 form a helical membrane-spanning segment; the sequence is TWITAIAVVLYLVQRYVRSYWRL. Topologically, residues 30 to 853 are cytoplasmic; that stretch reads KDIPGPVLAK…DIENAIEGQK (824 aa). Heme is bound at residue cysteine 449.

It belongs to the cytochrome P450 family. Requires heme as cofactor.

It is found in the endoplasmic reticulum membrane. The catalysed reaction is 5-methylorsellinate + reduced [NADPH--hemoprotein reductase] + O2 = 4,6-dihydroxy-2-(hydroxymethyl)-3-methylbenzoate + oxidized [NADPH--hemoprotein reductase] + H2O + H(+). The enzyme catalyses 4,6-dihydroxy-2-(hydroxymethyl)-3-methylbenzoate + H(+) = 5,7-dihydroxy-4-methylphthalide + H2O. The protein operates within secondary metabolite biosynthesis; terpenoid biosynthesis. Functionally, cytochrome P450 monooxygenase; part of the gene cluster that mediates the biosynthesis of mycophenolic acid (MPA), the first isolated antibiotic natural product in the world obtained from a culture of Penicillium brevicompactum in 1893. MpaDE' is an endoplasmic reticulum-bound enzyme that catalyzes the conversion of 5-methylorsellinic acid (5MOA) into the phthalide compound 5,7-dihydroxy-4,6-dimethylphthalide (DHMP). MpaDE' first catalyzes hydroxylation of 5-MOA to 4,6-dihydroxy-2-(hydroxymethyl)-3-methylbenzoic acid (DHMB), and then acts as a lactone synthase that catalyzes the ring closure to convert DHMB into DHMP. The first step of the pathway is the synthesis of 5-methylorsellinic acid (5MOA) by the cytosolic polyketide synthase mpaC. 5MOA is then converted to the phthalide compound 5,7-dihydroxy-4,6-dimethylphthalide (DHMP) by the endoplasmic reticulum-bound cytochrome P450 monooxygenase mpaDE. MpaDE first catalyzes hydroxylation of 5-MOA to 4,6-dihydroxy-2-(hydroxymethyl)-3-methylbenzoic acid (DHMB). MpaDE then acts as a lactone synthase that catalyzes the ring closure to convert DHMB into DHMP. The next step is the prenylation of DHMP by the Golgi apparatus-associated prenyltransferase mpaA to yield farnesyl-DHMP (FDHMP). The ER-bound oxygenase mpaB then mediates the oxidative cleavage the C19-C20 double bond in FDHMP to yield FDHMP-3C via a mycophenolic aldehyde intermediate. The O-methyltransferase mpaG catalyzes the methylation of FDHMP-3C to yield MFDHMP-3C. After the cytosolic methylation of FDHMP-3C, MFDHMP-3C enters into peroxisomes probably via free diffusion due to its low molecular weight. Upon a peroxisomal CoA ligation reaction, catalyzed by a beta-oxidation component enzyme acyl-CoA ligase ACL891, MFDHMP-3C-CoA would then be restricted to peroxisomes for the following beta-oxidation pathway steps. The peroxisomal beta-oxidation machinery than converts MFDHMP-3C-CoA into MPA_CoA, via a beta-oxidation chain-shortening process. Finally mpaH acts as a peroxisomal acyl-CoA hydrolase with high substrate specificity toward MPA-CoA to release the final product MPA. The protein is Cytochrome P450 monooxygenase mpaDE' of Penicillium brevicompactum.